The chain runs to 315 residues: Methionyl-tRNA formyltransferase (315 aa).

(6S)-5,6,7,8-tetrahydrofolate is bound at residue 111–114 (SLLP).

Belongs to the Fmt family.

The catalysed reaction is L-methionyl-tRNA(fMet) + (6R)-10-formyltetrahydrofolate = N-formyl-L-methionyl-tRNA(fMet) + (6S)-5,6,7,8-tetrahydrofolate + H(+). In terms of biological role, attaches a formyl group to the free amino group of methionyl-tRNA(fMet). The formyl group appears to play a dual role in the initiator identity of N-formylmethionyl-tRNA by promoting its recognition by IF2 and preventing the misappropriation of this tRNA by the elongation apparatus. The chain is Methionyl-tRNA formyltransferase from Flavobacterium johnsoniae (strain ATCC 17061 / DSM 2064 / JCM 8514 / BCRC 14874 / CCUG 350202 / NBRC 14942 / NCIMB 11054 / UW101) (Cytophaga johnsonae).